A 1110-amino-acid chain; its full sequence is MPRVESETYKRLQNDPSCIRNICIVAHVDHGKTSLSDSLLASNGIISQRLAGKIRFLDARPDEQLRGITMESSAISLYFRVLRKQEGSDEPLVSEHLVNLIDSPGHIDFSSEVSAASRLCDGAVVLVDVVEGVCSQTVTVLRQCWTEKLKPILVLNKIDRLITELQLTPQEAYIHLSKVIEQVNSVIGSFFANERQLDDLFWREQLEKNENAEYIEKDDSGIYFNPTDNNVIFASAIDGWGFNIGQLAKFYEQKLGAKRENLQKVLWGDFYMDPKTKKIINNKGLKGRSLKPLFTSLILENIWKIYQNIITSRDSEMVEKIAKTLNIKLLARDLRSKDDKQLLRTIMGQWLPVSTAVLLTVIEKLPSPLESQTDRLNTILVSESDTAAMDPRLLKAMKTCDKEGPVSAYVSKMLSIPREELPVESKRIASSDELMERSRKAREEALNAAKHAGMVENMAMMDLNDNSKNTSDLYKRAKDTVMTPEVGEQTKPKPSRNNDVFCVVSEPSSALDLEFEYEGEDDSDSQDNFGLDFVPTDIDPNDPLSSMFEYEEEDPLLESIKQISEDVNDEVDDIFDEKEECLVAFARIYSGTLRVGQEISVLGPKYDPKCPEEHIETAIITHLYLFMGKELVPLDVCPSGNIVGIRGLAGKVLKSGTLIEKGVQGVNLAGVNFHFTPIVRVAVEPANPVEMSKLVRGLKLLDQADPCVHTYVENTGEHILCTAGELHLERCLKDLTERFAGIEITHSEPAIPYRETFLSASDMNPPQNSQLGRGVHELLLSQYKITFRTFPLSGKVTDFLSQHQNSIKNILKTSTSSMDPVIESTGSSFLDKKSLLVAFEEVINQEEKSRELLSGFKVKLAGFGPSRVGCNILLSQDNLLGSLFEGTPAAFEYSDSIKNGFQLAVSEGPLANEPVQGMCVLVESVHKMSQDEIESIEDPRYQQHIVDLSGRLITSTRDAIHEAFLDWSPRIMWAIYSCDIQTSVDVLGKVYAVILQRHGKIISEEMKEGTPFFQIEAHVPVVEAFGLSEDIRKRTSGAAQPQLVFSGFECIDLDPFWVPTTEEELEELGDTADRENIARKHMNAIRRRKGLFIEEKVVENAEKQRTLKKN.

One can recognise a tr-type G domain in the interval 17–262; the sequence is SCIRNICIVA…QKLGAKRENL (246 aa). GTP-binding positions include 26–33, 102–106, and 156–159; these read AHVDHGKT, DSPGH, and NKID. The residue at position 431 (Ser-431) is a Phosphoserine.

This sequence belongs to the TRAFAC class translation factor GTPase superfamily. Classic translation factor GTPase family.

The protein resides in the cytoplasm. It carries out the reaction GTP + H2O = GDP + phosphate + H(+). Its activity is regulated as follows. GTPase activity is stimulated in the presence of 60S subunits. Functionally, GTPase involved in the biogenesis of the 60S ribosomal subunit and translational activation of ribosomes. Together with SDO1, may trigger the GTP-dependent release of TIF6 from 60S pre-ribosomes in the cytoplasm, thereby activating ribosomes for translation competence by allowing 80S ribosome assembly and facilitating TIF6 recycling to the nucleus, where it is required for 60S rRNA processing and nuclear export. Inhibits GTPase activity of ribosome-bound EF-2. In Saccharomyces cerevisiae (strain ATCC 204508 / S288c) (Baker's yeast), this protein is Ribosome assembly protein 1 (RIA1).